The following is a 304-amino-acid chain: MSWIERIKSNITPTRKASIPEGVWTKCDSCGQVLYRAELERNLEVCPKCDHHMRMTARNRLHSLLDEGSLVEMGSELEPKDVLKFRDSKKYKDRLASAQKETGEKDALVVMKGTLYGMPVVAAAFEFAFMGGSMGSVVGARFVRAVEQALEDNCPLICFSASGGARMQEALMSLMQMAKTSAALAKMQERGLPYISVLTDPTMGGVSASFAMLGDLNIAEPKALIGFAGPRVIEQTVREKLPLGFQRSEFLIEKGAIDMIVRRPEMRLKLASILAKLMNLPAPNPEAPREGVVVPPVPDQEPEA.

The CoA carboxyltransferase N-terminal domain occupies 23-292 (VWTKCDSCGQ…PNPEAPREGV (270 aa)). Zn(2+) is bound by residues Cys-27, Cys-30, Cys-46, and Cys-49. A C4-type zinc finger spans residues 27–49 (CDSCGQVLYRAELERNLEVCPKC). Residues 284–304 (NPEAPREGVVVPPVPDQEPEA) are disordered. The segment covering 295–304 (PPVPDQEPEA) has biased composition (pro residues).

This sequence belongs to the AccD/PCCB family. In terms of assembly, acetyl-CoA carboxylase is a heterohexamer composed of biotin carboxyl carrier protein (AccB), biotin carboxylase (AccC) and two subunits each of ACCase subunit alpha (AccA) and ACCase subunit beta (AccD). Zn(2+) serves as cofactor.

It localises to the cytoplasm. The catalysed reaction is N(6)-carboxybiotinyl-L-lysyl-[protein] + acetyl-CoA = N(6)-biotinyl-L-lysyl-[protein] + malonyl-CoA. Its pathway is lipid metabolism; malonyl-CoA biosynthesis; malonyl-CoA from acetyl-CoA: step 1/1. In terms of biological role, component of the acetyl coenzyme A carboxylase (ACC) complex. Biotin carboxylase (BC) catalyzes the carboxylation of biotin on its carrier protein (BCCP) and then the CO(2) group is transferred by the transcarboxylase to acetyl-CoA to form malonyl-CoA. In Shigella boydii serotype 4 (strain Sb227), this protein is Acetyl-coenzyme A carboxylase carboxyl transferase subunit beta.